A 365-amino-acid chain; its full sequence is Cobalt-precorrin-5B C(1)-methyltransferase (365 aa).

It belongs to the CbiD family.

The catalysed reaction is Co-precorrin-5B + S-adenosyl-L-methionine = Co-precorrin-6A + S-adenosyl-L-homocysteine. It participates in cofactor biosynthesis; adenosylcobalamin biosynthesis; cob(II)yrinate a,c-diamide from sirohydrochlorin (anaerobic route): step 6/10. Functionally, catalyzes the methylation of C-1 in cobalt-precorrin-5B to form cobalt-precorrin-6A. This chain is Cobalt-precorrin-5B C(1)-methyltransferase, found in Clostridium perfringens (strain 13 / Type A).